An 879-amino-acid chain; its full sequence is Fanconi anemia core complex-associated protein 100 (879 aa).

As to quaternary structure, belongs to the multisubunit FA complex composed of FANCA, FANCB, FANCC, FANCE, FANCF, FANCG, FANCL/PHF9, FANCM, FAAP24 and FAAP100. Forms a subcomplex with FANCB and FANCL.

Its subcellular location is the nucleus. Its function is as follows. Plays a role in Fanconi anemia-associated DNA damage response network. Regulates FANCD2 monoubiquitination and the stability of the FA core complex. Induces chromosomal instability as well as hypersensitivity to DNA cross-linking agents, when repressed. In Mus musculus (Mouse), this protein is Fanconi anemia core complex-associated protein 100.